The chain runs to 250 residues: NAD(P)H-quinone oxidoreductase subunit K, chloroplastic (250 aa).

Residues cysteine 61, cysteine 62, cysteine 126, and cysteine 157 each contribute to the [4Fe-4S] cluster site.

It belongs to the complex I 20 kDa subunit family. As to quaternary structure, NDH is composed of at least 16 different subunits, 5 of which are encoded in the nucleus. [4Fe-4S] cluster is required as a cofactor.

The protein localises to the plastid. Its subcellular location is the chloroplast thylakoid membrane. It catalyses the reaction a plastoquinone + NADH + (n+1) H(+)(in) = a plastoquinol + NAD(+) + n H(+)(out). It carries out the reaction a plastoquinone + NADPH + (n+1) H(+)(in) = a plastoquinol + NADP(+) + n H(+)(out). Functionally, NDH shuttles electrons from NAD(P)H:plastoquinone, via FMN and iron-sulfur (Fe-S) centers, to quinones in the photosynthetic chain and possibly in a chloroplast respiratory chain. The immediate electron acceptor for the enzyme in this species is believed to be plastoquinone. Couples the redox reaction to proton translocation, and thus conserves the redox energy in a proton gradient. This is NAD(P)H-quinone oxidoreductase subunit K, chloroplastic from Angiopteris evecta (Mule's foot fern).